Reading from the N-terminus, the 353-residue chain is Protein RecA (353 aa).

67 to 74 is a binding site for ATP; it reads GPESSGKT. Positions 330–353 are disordered; the sequence is SNPNSTPDFSVDDSEGVAETNEDF. Acidic residues predominate over residues 339 to 353; that stretch reads SVDDSEGVAETNEDF.

It belongs to the RecA family.

The protein localises to the cytoplasm. Its function is as follows. Can catalyze the hydrolysis of ATP in the presence of single-stranded DNA, the ATP-dependent uptake of single-stranded DNA by duplex DNA, and the ATP-dependent hybridization of homologous single-stranded DNAs. It interacts with LexA causing its activation and leading to its autocatalytic cleavage. The sequence is that of Protein RecA from Escherichia coli O157:H7 (strain EC4115 / EHEC).